A 341-amino-acid polypeptide reads, in one-letter code: MLVLGLETSCDETGVALYDSERGLLADALFSQIDLHRVYGGVVPELASRDHVKRMLPLIRQVLQEAGCVATEIDAIAYTAGPGLVGALLVGASCAQALAFAWDIPAIGVHHMEGHLLAPMLEEQPPEFPFVALLVSGGHTQLVRVDGIGQYELLGESLDDAAGEAFDKTAKLIGLNYPGGPEIARLAEQGTPGRFVFPRPMTDRPGLQFSFSGLKTFALNTWQQCRDAGDDNEQTRCDVSLAFQQAVVETLTIKCKRALKQTGLKRLVIAGGVSANKALRASLEDMLASIKGNVYYARPRFCTDNGAMIAYAGCQRLLAGQQQDLAISVQARWPMEQLPPV.

Fe cation contacts are provided by His-111 and His-115. Residues 134-138 (LVSGG), Asp-167, Gly-180, and Asn-276 each bind substrate. Asp-304 provides a ligand contact to Fe cation.

It belongs to the KAE1 / TsaD family. The cofactor is Fe(2+).

The protein resides in the cytoplasm. The enzyme catalyses L-threonylcarbamoyladenylate + adenosine(37) in tRNA = N(6)-L-threonylcarbamoyladenosine(37) in tRNA + AMP + H(+). In terms of biological role, required for the formation of a threonylcarbamoyl group on adenosine at position 37 (t(6)A37) in tRNAs that read codons beginning with adenine. Is involved in the transfer of the threonylcarbamoyl moiety of threonylcarbamoyl-AMP (TC-AMP) to the N6 group of A37, together with TsaE and TsaB. TsaD likely plays a direct catalytic role in this reaction. In Pseudomonas entomophila (strain L48), this protein is tRNA N6-adenosine threonylcarbamoyltransferase.